We begin with the raw amino-acid sequence, 504 residues long: Probable protein phosphatase 2C 18 (504 aa).

The disordered stretch occupies residues 1–49 (MGLCYSVDRTTGKEPGEASSTATTAETVEERSGSGRWRRPRDLKGGGDI). Low complexity predominate over residues 17-26 (EASSTATTAE). One can recognise a PPM-type phosphatase domain in the interval 67–399 (IACLYTQQGK…DDCTVVCLFL (333 aa)). 4 residues coordinate Mn(2+): Asp-103, Gly-104, Asp-344, and Asp-390. Positions 410–435 (TNVKKDSPKEESIESVTNSTSKEEDE) are disordered. The span at 412 to 421 (VKKDSPKEES) shows a compositional bias: basic and acidic residues.

The protein belongs to the PP2C family. The cofactor is Mg(2+). Requires Mn(2+) as cofactor.

The enzyme catalyses O-phospho-L-seryl-[protein] + H2O = L-seryl-[protein] + phosphate. It carries out the reaction O-phospho-L-threonyl-[protein] + H2O = L-threonyl-[protein] + phosphate. This Arabidopsis thaliana (Mouse-ear cress) protein is Probable protein phosphatase 2C 18.